The sequence spans 461 residues: Cysteine--tRNA ligase (461 aa).

Cysteine 28 serves as a coordination point for Zn(2+). The short motif at 30–40 (ITVYDLCHIGH) is the 'HIGH' region element. Residues cysteine 209, histidine 234, and glutamate 238 each contribute to the Zn(2+) site. The short motif at 266-270 (KMSKS) is the 'KMSKS' region element. Lysine 269 is an ATP binding site.

Belongs to the class-I aminoacyl-tRNA synthetase family. As to quaternary structure, monomer. The cofactor is Zn(2+).

Its subcellular location is the cytoplasm. It catalyses the reaction tRNA(Cys) + L-cysteine + ATP = L-cysteinyl-tRNA(Cys) + AMP + diphosphate. This chain is Cysteine--tRNA ligase, found in Salmonella dublin (strain CT_02021853).